The sequence spans 790 residues: IQ motif and ubiquitin-like domain-containing protein (790 aa).

Over residues 1 to 17 (MSNQPKKYETQNIANST) the composition is skewed to polar residues. A disordered region spans residues 1-49 (MSNQPKKYETQNIANSTEESDAFDIVTIPVPSEEPQESDQTEEHESGIE). The Ubiquitin-like domain occupies 130-206 (ATVKVVLIPV…IQVEIFSTNP (77 aa)). In terms of domain architecture, IQ spans 337-366 (RLKAVIVIQTYYRQWHAKIFVEDLRRQKSL).

In terms of assembly, component of the axonemal radial spoke 1 (RS1) complex, at least composed of spoke head proteins RSPH1, RSPH3, RSPH9 and the cilia-specific component RSPH4A or sperm-specific component RSPH6A, spoke stalk proteins RSPH14, DNAJB13, DYDC1, ROPN1L and NME5, and the anchor protein IQUB. Does not appear to be part of radial spoke complexes 2 or 3 (RS2 or RS3). Interacts with CALM1. Interacts with DNAJB13. Interacts with DYNLL2. Interacts with NME5. Interacts with RSPH3. Interacts with RSPH9. Interacts with ZMYND10. Interacts with calmodulin; the interaction occurs in conditions of low but not high calcium.

It localises to the cytoplasm. The protein resides in the cytoskeleton. It is found in the flagellum axoneme. Its subcellular location is the cell projection. The protein localises to the cilium. Its function is as follows. Adapter protein that anchors the radial spoke 1 (RS1) complex to the A microtubule of outer doublet microtubules in axonemes. The triple radial spokes (RS1, RS2 and RS3) are required to modulate beating of the sperm flagellum. May play a role in inhibiting signaling via MAPK1/ERK2 and MAPK3/ERK1. Additionally, may play a role in the functioning of cilia. Not required for the functioning of tracheal or ependymal cilia. The protein is IQ motif and ubiquitin-like domain-containing protein (IQUB) of Macaca fascicularis (Crab-eating macaque).